The sequence spans 399 residues: Aromatic-amino-acid aminotransferase (399 aa).

Substrate contacts are provided by glycine 36, tyrosine 67, tryptophan 132, and asparagine 184. Lysine 247 carries the post-translational modification N6-(pyridoxal phosphate)lysine. Arginine 375 provides a ligand contact to substrate.

This sequence belongs to the class-I pyridoxal-phosphate-dependent aminotransferase family. In terms of assembly, homodimer. Requires pyridoxal 5'-phosphate as cofactor.

The protein localises to the cytoplasm. The enzyme catalyses an aromatic L-alpha-amino acid + 2-oxoglutarate = an aromatic oxo-acid + L-glutamate. This Pseudomonas aeruginosa (strain ATCC 15692 / DSM 22644 / CIP 104116 / JCM 14847 / LMG 12228 / 1C / PRS 101 / PAO1) protein is Aromatic-amino-acid aminotransferase (phhC).